A 415-amino-acid chain; its full sequence is Probable glucuronosyltransferase Os03g0287800 (415 aa).

The Cytoplasmic segment spans residues 1 to 25 (MGSSTDHGGAGGRGKKGSGSQLWKK). Residues 26-43 (ALLHSSLCFVMGFFTGFA) form a helical; Signal-anchor for type II membrane protein membrane-spanning segment. Over 44–415 (PSSVSDWTSA…GGRFLSGDFC (372 aa)) the chain is Lumenal. N-linked (GlcNAc...) asparagine glycosylation is found at asparagine 78, asparagine 165, asparagine 257, and asparagine 287.

It belongs to the glycosyltransferase 43 family.

It is found in the golgi apparatus membrane. Functionally, involved in the synthesis of glucuronoxylan hemicellulose in secondary cell walls. The protein is Probable glucuronosyltransferase Os03g0287800 of Oryza sativa subsp. japonica (Rice).